A 487-amino-acid polypeptide reads, in one-letter code: Protein nucleotidyltransferase YdiU (487 aa).

8 residues coordinate ATP: Gly91, Gly93, Arg94, Lys114, Asp126, Gly127, Arg177, and Arg184. The active-site Proton acceptor is Asp253. Residues Asn254 and Asp263 each contribute to the Mg(2+) site. Asp263 is an ATP binding site.

The protein belongs to the SELO family. Mg(2+) serves as cofactor. The cofactor is Mn(2+).

It catalyses the reaction L-seryl-[protein] + ATP = 3-O-(5'-adenylyl)-L-seryl-[protein] + diphosphate. The enzyme catalyses L-threonyl-[protein] + ATP = 3-O-(5'-adenylyl)-L-threonyl-[protein] + diphosphate. It carries out the reaction L-tyrosyl-[protein] + ATP = O-(5'-adenylyl)-L-tyrosyl-[protein] + diphosphate. The catalysed reaction is L-histidyl-[protein] + UTP = N(tele)-(5'-uridylyl)-L-histidyl-[protein] + diphosphate. It catalyses the reaction L-seryl-[protein] + UTP = O-(5'-uridylyl)-L-seryl-[protein] + diphosphate. The enzyme catalyses L-tyrosyl-[protein] + UTP = O-(5'-uridylyl)-L-tyrosyl-[protein] + diphosphate. In terms of biological role, nucleotidyltransferase involved in the post-translational modification of proteins. It can catalyze the addition of adenosine monophosphate (AMP) or uridine monophosphate (UMP) to a protein, resulting in modifications known as AMPylation and UMPylation. The polypeptide is Protein nucleotidyltransferase YdiU (Yersinia pestis (strain Pestoides F)).